We begin with the raw amino-acid sequence, 424 residues long: Serine--tRNA ligase (424 aa).

Position 232-234 (232-234) interacts with L-serine; that stretch reads TAE. 263 to 265 contributes to the ATP binding site; that stretch reads RQE. Residue Glu-286 participates in L-serine binding. 350 to 353 contacts ATP; sequence EIGS. Ser-386 contributes to the L-serine binding site.

It belongs to the class-II aminoacyl-tRNA synthetase family. Type-1 seryl-tRNA synthetase subfamily. As to quaternary structure, homodimer. The tRNA molecule binds across the dimer.

It is found in the cytoplasm. The catalysed reaction is tRNA(Ser) + L-serine + ATP = L-seryl-tRNA(Ser) + AMP + diphosphate + H(+). The enzyme catalyses tRNA(Sec) + L-serine + ATP = L-seryl-tRNA(Sec) + AMP + diphosphate + H(+). It functions in the pathway aminoacyl-tRNA biosynthesis; selenocysteinyl-tRNA(Sec) biosynthesis; L-seryl-tRNA(Sec) from L-serine and tRNA(Sec): step 1/1. In terms of biological role, catalyzes the attachment of serine to tRNA(Ser). Is also able to aminoacylate tRNA(Sec) with serine, to form the misacylated tRNA L-seryl-tRNA(Sec), which will be further converted into selenocysteinyl-tRNA(Sec). The polypeptide is Serine--tRNA ligase (Aster yellows witches'-broom phytoplasma (strain AYWB)).